The sequence spans 106 residues: UPF0060 membrane protein Oant_2511 (106 aa).

4 consecutive transmembrane segments (helical) span residues 3–23 (FAIY…FWAW), 30–50 (PLWL…LTLI), 60–80 (AAYG…AEGA), and 84–104 (RWDV…LFAP).

It belongs to the UPF0060 family.

It localises to the cell inner membrane. The protein is UPF0060 membrane protein Oant_2511 of Brucella anthropi (strain ATCC 49188 / DSM 6882 / CCUG 24695 / JCM 21032 / LMG 3331 / NBRC 15819 / NCTC 12168 / Alc 37) (Ochrobactrum anthropi).